A 154-amino-acid polypeptide reads, in one-letter code: 6,7-dimethyl-8-ribityllumazine synthase (154 aa).

5-amino-6-(D-ribitylamino)uracil-binding positions include Phe22, Ala56–Glu58, and Ala80–Ile82. Glu85–Thr86 serves as a coordination point for (2S)-2-hydroxy-3-oxobutyl phosphate. His88 acts as the Proton donor in catalysis. 5-amino-6-(D-ribitylamino)uracil is bound at residue Phe113. A (2S)-2-hydroxy-3-oxobutyl phosphate-binding site is contributed by Arg127.

The protein belongs to the DMRL synthase family.

It catalyses the reaction (2S)-2-hydroxy-3-oxobutyl phosphate + 5-amino-6-(D-ribitylamino)uracil = 6,7-dimethyl-8-(1-D-ribityl)lumazine + phosphate + 2 H2O + H(+). It functions in the pathway cofactor biosynthesis; riboflavin biosynthesis; riboflavin from 2-hydroxy-3-oxobutyl phosphate and 5-amino-6-(D-ribitylamino)uracil: step 1/2. Its function is as follows. Catalyzes the formation of 6,7-dimethyl-8-ribityllumazine by condensation of 5-amino-6-(D-ribitylamino)uracil with 3,4-dihydroxy-2-butanone 4-phosphate. This is the penultimate step in the biosynthesis of riboflavin. This Thermoanaerobacter sp. (strain X514) protein is 6,7-dimethyl-8-ribityllumazine synthase.